A 302-amino-acid polypeptide reads, in one-letter code: UDP-N-acetylenolpyruvoylglucosamine reductase (302 aa).

Residues 31–213 (KIGGPADFLI…KKIREFREKR (183 aa)) enclose the FAD-binding PCMH-type domain. Arg-176 is an active-site residue. The active-site Proton donor is the Ser-226. Glu-296 is a catalytic residue.

It belongs to the MurB family. Requires FAD as cofactor.

Its subcellular location is the cytoplasm. The catalysed reaction is UDP-N-acetyl-alpha-D-muramate + NADP(+) = UDP-N-acetyl-3-O-(1-carboxyvinyl)-alpha-D-glucosamine + NADPH + H(+). It functions in the pathway cell wall biogenesis; peptidoglycan biosynthesis. In terms of biological role, cell wall formation. This Carboxydothermus hydrogenoformans (strain ATCC BAA-161 / DSM 6008 / Z-2901) protein is UDP-N-acetylenolpyruvoylglucosamine reductase.